The following is a 145-amino-acid chain: Transcriptional regulator MraZ (145 aa).

2 consecutive SpoVT-AbrB domains span residues 5–50 and 81–124; these read TFNH…ALPQ and AHEV…DRAA.

This sequence belongs to the MraZ family. Forms oligomers.

The protein resides in the cytoplasm. Its subcellular location is the nucleoid. This chain is Transcriptional regulator MraZ, found in Anaeromyxobacter dehalogenans (strain 2CP-1 / ATCC BAA-258).